The primary structure comprises 163 residues: MTTFLGNPVTFTGKQLQVGDTAHDFSLTATDLSKKTLADFAGKKKVLSIIPSIDTGVCSTQTRRFNQELSDLDNTVVITVSVDLPFAQGKWCAAEGIENAVMLSDYFDHSFGRDYAVLINEWHLLARAVLVLDENNTVTYAEYVDNINTEPDYDAAIAAVKSL.

The region spanning 16–162 (LQVGDTAHDF…YDAAIAAVKS (147 aa)) is the Thioredoxin domain. Catalysis depends on cysteine 58, which acts as the Cysteine sulfenic acid (-SOH) intermediate. Cysteine 58 and cysteine 92 are disulfide-bonded.

Belongs to the peroxiredoxin family. Tpx subfamily. Homodimer.

It carries out the reaction a hydroperoxide + [thioredoxin]-dithiol = an alcohol + [thioredoxin]-disulfide + H2O. Its function is as follows. Thiol-specific peroxidase that catalyzes the reduction of hydrogen peroxide and organic hydroperoxides to water and alcohols, respectively. Plays a role in cell protection against oxidative stress by detoxifying peroxides. The protein is Thiol peroxidase of Streptococcus sanguinis.